The following is a 407-amino-acid chain: Polygalacturonase (407 aa).

The first 26 residues, 1 to 26 (MAPHLNIVPSMFVLLLLFISASKVQS), serve as a signal peptide directing secretion. PbH1 repeat units follow at residues 180–206 (CKNI…HMGK) and 207–228 (SEGV…SIGD). An N-linked (GlcNAc...) asparagine glycan is attached at Asn182. Residue Asp221 is the Proton donor of the active site. An intrachain disulfide couples Cys223 to Cys240. The active site involves His244. PbH1 repeat units follow at residues 260 to 281 (VEGI…RIKT) and 290 to 311 (VSEI…LIDQ). N-linked (GlcNAc...) asparagine glycosylation is found at Asn267, Asn272, Asn302, and Asn331. 2 disulfide bridges follow: Cys351-Cys357 and Cys379-Cys395. Residues 357 to 384 (CQNVELADIDIKHNGAEPATSQCLNVKP) form a PbH1 5 repeat.

The protein belongs to the glycosyl hydrolase 28 family. Pollen.

It localises to the secreted. It is found in the cell wall. The enzyme catalyses (1,4-alpha-D-galacturonosyl)n+m + H2O = (1,4-alpha-D-galacturonosyl)n + (1,4-alpha-D-galacturonosyl)m.. Functionally, may function in the depolymerization of the pectin in its walls during pollen tube elongation, or in that of the pistil during pollination. The sequence is that of Polygalacturonase (G9) from Gossypium hirsutum (Upland cotton).